The following is a 333-amino-acid chain: Electron transfer flavoprotein subunit alpha, mitochondrial (333 aa).

The N-terminal 19 residues, 1-19 (MFRAAAPGQLRRAASLLRF), are a transit peptide targeting the mitochondrion. The segment at 20-204 (QSTLVIAEHA…GISEWLDQKL (185 aa)) is domain I. An N6-acetyllysine; alternate modification is found at Lys59. Lys59 carries the N6-succinyllysine; alternate modification. N6-acetyllysine is present on Lys62. Lys69 is modified (N6-acetyllysine; alternate). An N6-succinyllysine; alternate modification is found at Lys69. Lys75 is modified (N6-acetyllysine). An N6-acetyllysine; alternate modification is found at Lys85. An N6-succinyllysine; alternate modification is found at Lys85. Position 93 is a phosphothreonine (Thr93). N6-acetyllysine occurs at positions 101 and 139. Ser140 bears the Phosphoserine mark. The residue at position 158 (Lys158) is an N6-acetyllysine; alternate. Position 158 is an N6-succinyllysine; alternate (Lys158). The residue at position 164 (Lys164) is an N6-acetyllysine. Position 187 is an N6-succinyllysine (Lys187). Lys203 carries the N6-acetyllysine; alternate modification. At Lys203 the chain carries N6-succinyllysine; alternate. Residues 205–333 (TKSDRPELTG…PEMTEILKKK (129 aa)) are domain II. At Lys216 the chain carries N6-succinyllysine. Residue Arg223 participates in FAD binding. N6-acetyllysine; alternate is present on residues Lys226 and Lys232. N6-succinyllysine; alternate is present on residues Lys226 and Lys232. Residues Ser248, 263-266 (VGQT), 281-286 (SGAIQH), and Asn300 each bind FAD. The residue at position 301 (Lys301) is an N6-succinyllysine. 318-319 (DL) is an FAD binding site.

This sequence belongs to the ETF alpha-subunit/FixB family. As to quaternary structure, heterodimer composed of ETFA and ETFB. Identified in a complex that contains ETFA, ETFB and ETFRF1. Interaction with ETFRF1 promotes dissociation of the bound FAD and loss of electron transfer activity. Interacts with TASOR. FAD serves as cofactor.

It is found in the mitochondrion matrix. Its function is as follows. Heterodimeric electron transfer flavoprotein that accepts electrons from several mitochondrial dehydrogenases, including acyl-CoA dehydrogenases, glutaryl-CoA and sarcosine dehydrogenase. It transfers the electrons to the main mitochondrial respiratory chain via ETF-ubiquinone oxidoreductase (ETF dehydrogenase). Required for normal mitochondrial fatty acid oxidation and normal amino acid metabolism. The sequence is that of Electron transfer flavoprotein subunit alpha, mitochondrial (Etfa) from Rattus norvegicus (Rat).